Consider the following 85-residue polypeptide: MLAGMPSLSHEEQQEAVERIHKFMSEGMSSGEAIALVAAEIRERHQNDPQAMAIFEDHDFDEHTESDYRRDDEPDADDIEDLYEG.

Residues aspartate 57–aspartate 72 show a composition bias toward basic and acidic residues. The tract at residues aspartate 57–glycine 85 is disordered. Over residues glutamate 73–glycine 85 the composition is skewed to acidic residues.

It belongs to the UPF0181 family.

The sequence is that of UPF0181 protein YPTS_1774 from Yersinia pseudotuberculosis serotype IB (strain PB1/+).